We begin with the raw amino-acid sequence, 696 residues long: Iron-sulfur clusters transporter ATM1, mitochondrial (696 aa).

The N-terminal 67 residues, Met1–Gly67, are a transit peptide targeting the mitochondrion. At Val68 to Arg109 the chain is on the mitochondrial matrix side. A helical transmembrane segment spans residues Val110 to Phe131. Residues Val110–Gln400 enclose the ABC transmembrane type-1 domain. Residues Lys132–Gly154 lie on the Mitochondrial intermembrane side of the membrane. Residues Thr155–Phe178 traverse the membrane as a helical segment. At Ala179–Val227 the chain is on the mitochondrial matrix side. Residues Leu228–Tyr251 form a helical membrane-spanning segment. Position 252 (Asn252) is a topological domain, mitochondrial intermembrane. A helical transmembrane segment spans residues Tyr253–Ile273. Residues Lys274–Ala339 lie on the Mitochondrial matrix side of the membrane. Glutathione-binding positions include Arg279 to Arg283 and Asn342 to Gln345. The chain crosses the membrane as a helical span at residues Tyr340–Tyr358. The Mitochondrial intermembrane portion of the chain corresponds to Met359–Asp373. Residues Leu374 to Tyr395 traverse the membrane as a helical segment. Gly392 lines the glutathione pocket. Residues Arg396–Lys696 lie on the Mitochondrial matrix side of the membrane. The region spanning Ile438–Asn674 is the ABC transporter domain. ATP contacts are provided by residues Tyr447 and Gly471–Arg482.

The protein belongs to the ABC transporter superfamily. ABCB family. Heavy Metal importer (TC 3.A.1.210) subfamily. Homodimer.

It is found in the mitochondrion inner membrane. Performs an essential function in the generation of cytoplasmic iron-sulfur proteins by mediating the ATP-dependent export of Fe/S cluster precursors synthesized by NFS1 and other mitochondrial proteins. Hydrolyzes ATP. Binds glutathione and may function by transporting a glutathione-conjugated iron-sulfur compound. This chain is Iron-sulfur clusters transporter ATM1, mitochondrial, found in Debaryomyces hansenii (strain ATCC 36239 / CBS 767 / BCRC 21394 / JCM 1990 / NBRC 0083 / IGC 2968) (Yeast).